Here is a 107-residue protein sequence, read N- to C-terminus: NADH dehydrogenase [ubiquinone] 1 beta subcomplex subunit 10-A (107 aa).

Residues 1 to 23 (MGRKKGLPEFEESAPDGFDPENP) are disordered.

The protein belongs to the complex I NDUFB10 subunit family. Complex I is composed of at least 49 different subunits.

It localises to the mitochondrion inner membrane. In terms of biological role, accessory subunit of the mitochondrial membrane respiratory chain NADH dehydrogenase (Complex I), that is believed not to be involved in catalysis. Complex I functions in the transfer of electrons from NADH to the respiratory chain. The immediate electron acceptor for the enzyme is believed to be ubiquinone. This Arabidopsis thaliana (Mouse-ear cress) protein is NADH dehydrogenase [ubiquinone] 1 beta subcomplex subunit 10-A.